The following is a 60-amino-acid chain: Protein CADMIUM TOLERANCE 4 (60 aa).

The helical transmembrane segment at 26–42 (GFLYACLFMLCCCFCCY) threads the bilayer.

Belongs to the CYSTM1 family. In terms of tissue distribution, mainly expressed in shoots, and, to a lower extent, in roots.

The protein localises to the cell membrane. The protein resides in the secreted. Its subcellular location is the cell wall. In terms of biological role, confers resistance to heavy metal ions (e.g. aluminium (Al)) by chelating them at the plasma membrane of root cells, thus stopping their entry and reducing their accumulation. This chain is Protein CADMIUM TOLERANCE 4, found in Oryza sativa subsp. japonica (Rice).